A 241-amino-acid chain; its full sequence is Putative integrase ORF241 (241 aa).

Residues valine 82–aspartate 241 enclose the Tyr recombinase domain. Catalysis depends on residues arginine 119, lysine 144, histidine 191, arginine 194, and histidine 217. Residue tyrosine 226 is the O-(3'-phospho-DNA)-tyrosine intermediate of the active site.

This sequence belongs to the 'phage' integrase family.

This protein may encode an integrase, which is necessary for integration of the viral DNA into host genome. The polypeptide is Putative integrase ORF241 (Acidianus convivator (ATV)).